The following is a 324-amino-acid chain: dITP/XTP pyrophosphatase (324 aa).

Residues Met1–Val126 are unknown. Residues Leu127–Gln324 form an NTP pyrophosphatase region. Residue Thr131–Lys136 coordinates substrate. Residue Asp193 is the Proton acceptor of the active site. Asp193 contributes to the Mg(2+) binding site. Substrate is bound by residues Ser194, Phe277–Asp280, Lys300, and His305–Arg306.

The protein belongs to the HAM1 NTPase family. Homodimer. Mg(2+) is required as a cofactor.

It carries out the reaction XTP + H2O = XMP + diphosphate + H(+). The catalysed reaction is dITP + H2O = dIMP + diphosphate + H(+). It catalyses the reaction ITP + H2O = IMP + diphosphate + H(+). In terms of biological role, pyrophosphatase that catalyzes the hydrolysis of nucleoside triphosphates to their monophosphate derivatives, with a high preference for the non-canonical purine nucleotides XTP (xanthosine triphosphate), dITP (deoxyinosine triphosphate) and ITP. Seems to function as a house-cleaning enzyme that removes non-canonical purine nucleotides from the nucleotide pool, thus preventing their incorporation into DNA/RNA and avoiding chromosomal lesions. In Streptococcus thermophilus (strain ATCC BAA-250 / LMG 18311), this protein is dITP/XTP pyrophosphatase.